The following is a 130-amino-acid chain: uncharacterized protein (130 aa).

Residues 1-28 (MELAKERNGPHQKHHGQCQNHCTSPNTV) are disordered. Over residues 17–28 (QCQNHCTSPNTV) the composition is skewed to polar residues.

This is an uncharacterized protein from Saccharomyces cerevisiae (strain ATCC 204508 / S288c) (Baker's yeast).